The primary structure comprises 166 residues: Small ribosomal subunit protein cS23z (166 aa).

Belongs to the chloroplast-specific ribosomal protein cS23 family. As to quaternary structure, part of the 30S ribosomal subunit.

It is found in the plastid. It localises to the chloroplast. Functionally, component of the chloroplast ribosome (chloro-ribosome), a dedicated translation machinery responsible for the synthesis of chloroplast genome-encoded proteins, including proteins of the transcription and translation machinery and components of the photosynthetic apparatus. This Arabidopsis thaliana (Mouse-ear cress) protein is Small ribosomal subunit protein cS23z.